A 638-amino-acid polypeptide reads, in one-letter code: Threonine--tRNA ligase (638 aa).

Residues 1 to 62 (MYQLTLPDKS…EKNSNIEVLT (62 aa)) enclose the TGS domain. Residues 246–537 (DHRKIGKEMD…LIEHYEGKFP (292 aa)) form a catalytic region. Zn(2+) is bound by residues C337, H388, and H514.

It belongs to the class-II aminoacyl-tRNA synthetase family. In terms of assembly, homodimer. Zn(2+) is required as a cofactor.

It localises to the cytoplasm. The catalysed reaction is tRNA(Thr) + L-threonine + ATP = L-threonyl-tRNA(Thr) + AMP + diphosphate + H(+). In terms of biological role, catalyzes the attachment of threonine to tRNA(Thr) in a two-step reaction: L-threonine is first activated by ATP to form Thr-AMP and then transferred to the acceptor end of tRNA(Thr). Also edits incorrectly charged L-seryl-tRNA(Thr). This chain is Threonine--tRNA ligase, found in Leptospira interrogans serogroup Icterohaemorrhagiae serovar copenhageni (strain Fiocruz L1-130).